Reading from the N-terminus, the 217-residue chain is Urease accessory protein UreG (217 aa).

13-20 (GPVGSGKT) is a GTP binding site.

It belongs to the SIMIBI class G3E GTPase family. UreG subfamily. As to quaternary structure, homodimer. UreD, UreF and UreG form a complex that acts as a GTP-hydrolysis-dependent molecular chaperone, activating the urease apoprotein by helping to assemble the nickel containing metallocenter of UreC. The UreE protein probably delivers the nickel.

The protein localises to the cytoplasm. Facilitates the functional incorporation of the urease nickel metallocenter. This process requires GTP hydrolysis, probably effectuated by UreG. In Frankia alni (strain DSM 45986 / CECT 9034 / ACN14a), this protein is Urease accessory protein UreG.